The sequence spans 182 residues: Pyruvoyl-dependent arginine decarboxylase (182 aa).

Ser44 is modified (pyruvic acid (Ser)).

This sequence belongs to the PdaD family. Pyruvate serves as cofactor.

It carries out the reaction L-arginine + H(+) = agmatine + CO2. The sequence is that of Pyruvoyl-dependent arginine decarboxylase from Picrophilus torridus (strain ATCC 700027 / DSM 9790 / JCM 10055 / NBRC 100828 / KAW 2/3).